We begin with the raw amino-acid sequence, 461 residues long: Transforming growth factor beta-1-induced transcript 1 protein (461 aa).

Position 1 is an N-acetylmethionine (M1). Residues 1-87 (MEDLDALLSD…PFSSSSGVLG (87 aa)) are disordered. A transcription activation region spans residues 1-200 (MEDLDALLSD…GCPSPPGQTS (200 aa)). The interval 1–240 (MEDLDALLSD…CNKPIAGQVV (240 aa)) is interaction with PTK2B/PYK2. Residues 3–15 (DLDALLSDLETTT) carry the LD motif 1 motif. Position 33 is a phosphothreonine (T33). Residue Y38 is modified to Phosphotyrosine. A compositionally biased stretch (low complexity) spans 44–53 (TGSGESSGTT). Y60 carries the post-translational modification Phosphotyrosine. S68 is modified (phosphoserine). The tract at residues 83–136 (SGVLGNGLCELDRLLQELNATQFNITDEIMSQFPSSKMAEGEEKEDQSEDKSSP) is interaction with PTK2/FAK1. Positions 92 to 104 (ELDRLLQELNATQ) match the LD motif 2 motif. Residues 116–154 (PSSKMAEGEEKEDQSEDKSSPTVPPSPFPAPSKPSATSA) form a disordered region. The segment covering 137 to 147 (TVPPSPFPAPS) has biased composition (pro residues). 3 positions are modified to phosphoserine: S141, S164, and S186. An LD motif 3 motif is present at residues 157-168 (ELDRLMASLSDF). A disordered region spans residues 171–204 (QNHLPASGPPQPPAASPTREGCPSPPGQTSKGSL). Position 188 is a phosphothreonine (T188). Position 194 is a phosphoserine (S194). Residues 203 to 215 (SLDTMLGLLQSDL) carry the LD motif 4 motif. LIM zinc-binding domains follow at residues 226 to 285 (GLCG…RFSP), 286 to 343 (RCGF…QLFA), 344 to 403 (PRCQ…QRGS), and 404 to 461 (LCAT…KLFG). S403 is modified (phosphoserine). Position 407 is a phosphothreonine (T407).

The protein belongs to the paxillin family. Homooligomer. Interacts with PPARG. Interacts with TRAF4. Interacts with CRIP2. Interacts with HSPB1. Interacts with ILK. Interacts with LIMS1 and LIMS2. Interacts with NCK2. Interacts with NUDT16L1. Interacts with PAK. Interacts with PTPN12. Interacts with TCF3. Interacts with TCF7L2. Interacts with VCL. Interacts (via LD motif 3) with GIT1. Also interacts with GIT2. Forms a complex with ARHGEF7. Interacts with AR/androgen receptor in a ligand-dependent manner. Interacts with CSK. Interacts with PTK2/FAK1 and PTK2B/PYK2. Interacts with SLC6A3. Interacts with SLC6A4. Interacts with NR3C1. Interacts with SMAD3. Interacts with MAPK15. Interacts with SRC. Interacts with LYN. Interacts with talin. Interacts (via LIM zinc-binding domain 2) with CBLC (via RING-type zinc finger); the interaction is direct and enhances CBLC E3 ubiquitin-protein ligase activity. Interacts with PARVA. Interacts with PXN. Post-translationally, phosphorylated by gonadotropin-releasing hormone-activated SRC. As to expression, ubiquitously expressed. Higher expression is detected in lung and spleen. Expression decreases during pregnancy in mammary glands. Expressed in all brain areas, with higher levels in cerebellum, prefrontal cortex and hypothalamus. Expressed in smooth muscle, myoepithelial cells and platelets (at protein level). Preferentially expressed in mesenchymal versus epithelial cells (at protein level).

Its subcellular location is the cell junction. The protein localises to the focal adhesion. It localises to the nucleus matrix. The protein resides in the cytoplasm. It is found in the cytoskeleton. In terms of biological role, functions as a molecular adapter coordinating multiple protein-protein interactions at the focal adhesion complex and in the nucleus. Links various intracellular signaling modules to plasma membrane receptors and regulates the Wnt and TGFB signaling pathways. May also regulate SLC6A3 and SLC6A4 targeting to the plasma membrane hence regulating their activity. In the nucleus, functions as a nuclear receptor coactivator regulating glucocorticoid, androgen, mineralocorticoid and progesterone receptor transcriptional activity. May play a role in the processes of cell growth, proliferation, migration, differentiation and senescence. May have a zinc-dependent DNA-binding activity. The sequence is that of Transforming growth factor beta-1-induced transcript 1 protein (Tgfb1i1) from Mus musculus (Mouse).